The chain runs to 372 residues: Glutamine synthetase (372 aa).

One can recognise a GS beta-grasp domain in the interval 24–103 (VIAEYVWVDG…VLAECFNSDG (80 aa)). Residues 110–372 (HRHEANKLFQ…KEYERETNEQ (263 aa)) form the GS catalytic domain.

The protein belongs to the glutamine synthetase family. As to quaternary structure, homooctamer.

The protein localises to the cytoplasm. It carries out the reaction L-glutamate + NH4(+) + ATP = L-glutamine + ADP + phosphate + H(+). This is Glutamine synthetase (GLN1) from Candida glabrata (strain ATCC 2001 / BCRC 20586 / JCM 3761 / NBRC 0622 / NRRL Y-65 / CBS 138) (Yeast).